Consider the following 116-residue polypeptide: NADH-ubiquinone oxidoreductase chain 3 (116 aa).

3 helical membrane passes run 4-24, 56-76, and 88-108; these read LIIT…IAFW, FFLV…LLPL, and TLIL…YEWI.

The protein belongs to the complex I subunit 3 family. In terms of assembly, core subunit of respiratory chain NADH dehydrogenase (Complex I) which is composed of 45 different subunits. Interacts with TMEM186. Interacts with TMEM242.

The protein resides in the mitochondrion inner membrane. It catalyses the reaction a ubiquinone + NADH + 5 H(+)(in) = a ubiquinol + NAD(+) + 4 H(+)(out). Its function is as follows. Core subunit of the mitochondrial membrane respiratory chain NADH dehydrogenase (Complex I) which catalyzes electron transfer from NADH through the respiratory chain, using ubiquinone as an electron acceptor. Essential for the catalytic activity of complex I. The protein is NADH-ubiquinone oxidoreductase chain 3 of Didelphis virginiana (North American opossum).